The following is a 233-amino-acid chain: Mediator of RNA polymerase II transcription subunit 7 (233 aa).

Residue K185 forms a Glycyl lysine isopeptide (Lys-Gly) (interchain with G-Cter in SUMO1); alternate linkage. A Glycyl lysine isopeptide (Lys-Gly) (interchain with G-Cter in SUMO2); alternate cross-link involves residue K185. The interval 188-213 (PMDADDSNNCTGQSDQQRENSGHRRD) is disordered. The residue at position 194 (S194) is a Phosphoserine. Over residues 203 to 213 (QQRENSGHRRD) the composition is skewed to basic and acidic residues.

It belongs to the Mediator complex subunit 7 family. As to quaternary structure, component of the Mediator complex, which is composed of MED1, MED4, MED6, MED7, MED8, MED9, MED10, MED11, MED12, MED13, MED13L, MED14, MED15, MED16, MED17, MED18, MED19, MED20, MED21, MED22, MED23, MED24, MED25, MED26, MED27, MED29, MED30, MED31, CCNC, CDK8 and CDC2L6/CDK11. The MED12, MED13, CCNC and CDK8 subunits form a distinct module termed the CDK8 module. Mediator containing the CDK8 module is less active than Mediator lacking this module in supporting transcriptional activation. Individual preparations of the Mediator complex lacking one or more distinct subunits have been variously termed ARC, CRSP, DRIP, PC2, SMCC and TRAP.

The protein localises to the nucleus. Component of the Mediator complex, a coactivator involved in the regulated transcription of nearly all RNA polymerase II-dependent genes. Mediator functions as a bridge to convey information from gene-specific regulatory proteins to the basal RNA polymerase II transcription machinery. Mediator is recruited to promoters by direct interactions with regulatory proteins and serves as a scaffold for the assembly of a functional preinitiation complex with RNA polymerase II and the general transcription factors. The protein is Mediator of RNA polymerase II transcription subunit 7 (MED7) of Sus scrofa (Pig).